The sequence spans 161 residues: S-ribosylhomocysteine lyase (161 aa).

Residues His-58, His-62, and Cys-128 each coordinate Fe cation.

The protein belongs to the LuxS family. Homodimer. Fe cation serves as cofactor.

The enzyme catalyses S-(5-deoxy-D-ribos-5-yl)-L-homocysteine = (S)-4,5-dihydroxypentane-2,3-dione + L-homocysteine. Functionally, involved in the synthesis of autoinducer 2 (AI-2) which is secreted by bacteria and is used to communicate both the cell density and the metabolic potential of the environment. The regulation of gene expression in response to changes in cell density is called quorum sensing. Catalyzes the transformation of S-ribosylhomocysteine (RHC) to homocysteine (HC) and 4,5-dihydroxy-2,3-pentadione (DPD). The protein is S-ribosylhomocysteine lyase of Bifidobacterium adolescentis (strain ATCC 15703 / DSM 20083 / NCTC 11814 / E194a).